The primary structure comprises 44 residues: Cuticle protein CP459 (44 aa).

Repeat copies occupy residues 3–20 and 27–44.

Calcified shell.

The sequence is that of Cuticle protein CP459 from Cancer pagurus (Rock crab).